The following is an 879-amino-acid chain: Alanine--tRNA ligase (879 aa).

The Zn(2+) site is built by His-566, His-570, Cys-668, and His-672.

This sequence belongs to the class-II aminoacyl-tRNA synthetase family. Zn(2+) serves as cofactor.

It is found in the cytoplasm. The enzyme catalyses tRNA(Ala) + L-alanine + ATP = L-alanyl-tRNA(Ala) + AMP + diphosphate. Functionally, catalyzes the attachment of alanine to tRNA(Ala) in a two-step reaction: alanine is first activated by ATP to form Ala-AMP and then transferred to the acceptor end of tRNA(Ala). Also edits incorrectly charged Ser-tRNA(Ala) and Gly-tRNA(Ala) via its editing domain. This chain is Alanine--tRNA ligase, found in Halalkalibacterium halodurans (strain ATCC BAA-125 / DSM 18197 / FERM 7344 / JCM 9153 / C-125) (Bacillus halodurans).